A 102-amino-acid chain; its full sequence is Small ribosomal subunit protein bS20 (102 aa).

It belongs to the bacterial ribosomal protein bS20 family.

Its function is as follows. Binds directly to 16S ribosomal RNA. In Synechococcus sp. (strain WH7803), this protein is Small ribosomal subunit protein bS20.